The chain runs to 544 residues: CTP synthase (544 aa).

Positions 1–267 are amidoligase domain; it reads MSKFIFVTGG…GDLLVSRLHL (267 aa). S13 provides a ligand contact to CTP. S13 lines the UTP pocket. Position 14-19 (14-19) interacts with ATP; that stretch reads SVGKGI. Position 54 (Y54) interacts with L-glutamine. D71 is an ATP binding site. Mg(2+) contacts are provided by D71 and E141. Residues 148–150, 188–193, and K224 each bind CTP; these read DIE and KTKPTQ. UTP is bound by residues 188–193 and K224; that span reads KTKPTQ. In terms of domain architecture, Glutamine amidotransferase type-1 spans 299-534; it reads YVELKDAYYS…INAAKKVIRD (236 aa). G354 serves as a coordination point for L-glutamine. The active-site Nucleophile; for glutamine hydrolysis is the C381. L-glutamine contacts are provided by residues 382–385, E405, and R462; that span reads LGMQ. Residues H507 and E509 contribute to the active site.

This sequence belongs to the CTP synthase family. Homotetramer.

The catalysed reaction is UTP + L-glutamine + ATP + H2O = CTP + L-glutamate + ADP + phosphate + 2 H(+). It catalyses the reaction L-glutamine + H2O = L-glutamate + NH4(+). It carries out the reaction UTP + NH4(+) + ATP = CTP + ADP + phosphate + 2 H(+). It functions in the pathway pyrimidine metabolism; CTP biosynthesis via de novo pathway; CTP from UDP: step 2/2. Allosterically activated by GTP, when glutamine is the substrate; GTP has no effect on the reaction when ammonia is the substrate. The allosteric effector GTP functions by stabilizing the protein conformation that binds the tetrahedral intermediate(s) formed during glutamine hydrolysis. Inhibited by the product CTP, via allosteric rather than competitive inhibition. Its function is as follows. Catalyzes the ATP-dependent amination of UTP to CTP with either L-glutamine or ammonia as the source of nitrogen. Regulates intracellular CTP levels through interactions with the four ribonucleotide triphosphates. The polypeptide is CTP synthase (Dehalococcoides mccartyi (strain ATCC BAA-2100 / JCM 16839 / KCTC 5957 / BAV1)).